The following is a 144-amino-acid chain: AP-4 complex subunit sigma-1 (144 aa).

It belongs to the adaptor complexes small subunit family. In terms of assembly, adaptor protein complex 4 (AP-4) is a heterotetramer composed of two large adaptins (epsilon-type subunit AP4E1 and beta-type subunit AP4B1), a medium adaptin (mu-type subunit AP4M1) and a small adaptin (sigma-type AP4S1).

The protein localises to the golgi apparatus. It localises to the trans-Golgi network membrane. Functionally, component of the adaptor protein complex 4 (AP-4). Adaptor protein complexes are vesicle coat components involved both in vesicle formation and cargo selection. They control the vesicular transport of proteins in different trafficking pathways. AP-4 forms a non clathrin-associated coat on vesicles departing the trans-Golgi network (TGN) and may be involved in the targeting of proteins from the trans-Golgi network (TGN) to the endosomal-lysosomal system. It is also involved in protein sorting to the basolateral membrane in epithelial cells and the proper asymmetric localization of somatodendritic proteins in neurons. AP-4 is involved in the recognition and binding of tyrosine-based sorting signals found in the cytoplasmic part of cargos, but may also recognize other types of sorting signal. This Mus musculus (Mouse) protein is AP-4 complex subunit sigma-1.